A 200-amino-acid chain; its full sequence is Recombination protein RecR (200 aa).

A C4-type zinc finger spans residues 59 to 74 (CEKCNTFTEAQVCEVC). The Toprim domain maps to 82-177 (ALLCVVETPA…AVTRLARGVP (96 aa)).

Belongs to the RecR family.

Its function is as follows. May play a role in DNA repair. It seems to be involved in an RecBC-independent recombinational process of DNA repair. It may act with RecF and RecO. The chain is Recombination protein RecR from Burkholderia pseudomallei (strain 1106a).